A 707-amino-acid chain; its full sequence is MARKTSIERYRNIGICAHVDAGKTTTTERVLFYTGLSHKIGEVHDGAATMDWMEQEQERGITITSAATTCFWQGMDKQFPEHRVNIIDTPGHVDFTIEVERSLRVLDGAVVVLCASSGVQPQTETVWRQANKYEVPRMVFVNKMDRAGADFLSVVHQMKTRLAAQAVPMQLPVGAEDNFRGVVDLVKMKFINWSEEDMGTSFTYEDIPADMVDECEKYHGELVEAAAEANEELMNKYLEEGELTEAEIKQGLRIRTLANDICLVACGSAFKNKGVQAVLDAVIEYLPSPTEVKPITGILDDESEGVRKSSDEEPFSALAFKIATDPFVGTLTFVRVYSGVLNQGDGVVNPVKNKKERVGRMVQMHSNSREEIKEVRAGDIAALIGLKDVTTGDTLCDPAHKITLERMEFPEPVISVAVEPKTKADQEKMGIALGKLAAEDPSFRVKTDEESGQTIISGMGELHLDIIVDRMKREFKVECNVGQPQVAYREAIRDAVEIEGKFVRQSGGRGQFGHVWLKLEPMTIEEDANGDDITYKFVNEIVGGVVPKEYIPAVDKGIQEQMQQGVLAGYPVLGVKATLYDGSYHDVDSSEMAFKIAGSMAFKKGALKANPALLEPMMKVEVITPEESMGDVVGDLNRRRGLIEGMEEAPGGLKAVNAQVPLSEMFGYATDLRSQTQGRASYSMEFLKYAEAPNNIAEKVMAERNAK.

In terms of domain architecture, tr-type G spans 8–290 (ERYRNIGICA…AVIEYLPSPT (283 aa)). GTP contacts are provided by residues 17–24 (AHVDAGKT), 88–92 (DTPGH), and 142–145 (NKMD).

Belongs to the TRAFAC class translation factor GTPase superfamily. Classic translation factor GTPase family. EF-G/EF-2 subfamily.

The protein resides in the cytoplasm. Functionally, catalyzes the GTP-dependent ribosomal translocation step during translation elongation. During this step, the ribosome changes from the pre-translocational (PRE) to the post-translocational (POST) state as the newly formed A-site-bound peptidyl-tRNA and P-site-bound deacylated tRNA move to the P and E sites, respectively. Catalyzes the coordinated movement of the two tRNA molecules, the mRNA and conformational changes in the ribosome. The polypeptide is Elongation factor G (Idiomarina loihiensis (strain ATCC BAA-735 / DSM 15497 / L2-TR)).